The primary structure comprises 224 residues: Heme response regulator HssR (224 aa).

The 114-residue stretch at 3–116 (QCLVVDDDPR…ELIFRIRAVL (114 aa)) folds into the Response regulatory domain. Asp-52 is modified (4-aspartylphosphate). The ompR/PhoB-type DNA-binding region spans 124–222 (NSEMTIGNLT…VRGQGYKVEN (99 aa)).

In terms of processing, phosphorylated by HssS.

Its subcellular location is the cytoplasm. Its function is as follows. Member of the two-component regulatory system HssS/HssR involved in intracellular heme homeostasis and tempering of staphylococcal virulence. Phosphorylated HssR binds to a direct repeat sequence within hrtAB promoter and activates the expression of hrtAB, an efflux pump, in response to extracellular heme, hemin, hemoglobin or blood. This is Heme response regulator HssR (hssR) from Staphylococcus aureus (strain MRSA252).